We begin with the raw amino-acid sequence, 197 residues long: Ribonuclease HII (197 aa).

In terms of domain architecture, RNase H type-2 spans 9-197 (ELIAGVDEVG…APVKKALEQF (189 aa)). 3 residues coordinate a divalent metal cation: D15, E16, and D107.

Belongs to the RNase HII family. The cofactor is Mn(2+). It depends on Mg(2+) as a cofactor.

Its subcellular location is the cytoplasm. It carries out the reaction Endonucleolytic cleavage to 5'-phosphomonoester.. Functionally, endonuclease that specifically degrades the RNA of RNA-DNA hybrids. The sequence is that of Ribonuclease HII from Haemophilus influenzae (strain PittGG).